Reading from the N-terminus, the 498-residue chain is Ribose import ATP-binding protein RbsA (498 aa).

ABC transporter domains are found at residues 2-237 (LALQ…VGRD) and 247-491 (VTPG…TGQQ). An ATP-binding site is contributed by 34 to 41 (GENGAGKS).

It belongs to the ABC transporter superfamily. Ribose importer (TC 3.A.1.2.1) family. As to quaternary structure, the complex is composed of an ATP-binding protein (RbsA), two transmembrane proteins (RbsC) and a solute-binding protein (RbsB).

The protein resides in the cell membrane. The enzyme catalyses D-ribose(out) + ATP + H2O = D-ribose(in) + ADP + phosphate + H(+). Part of the ABC transporter complex RbsABC involved in ribose import. Responsible for energy coupling to the transport system. This Deinococcus geothermalis (strain DSM 11300 / CIP 105573 / AG-3a) protein is Ribose import ATP-binding protein RbsA.